The sequence spans 821 residues: Dapper homolog 1 (821 aa).

The stretch at 88–136 forms a coiled coil; sequence LNTEEKLLEENILLLRKQLNCLRRRDAGLINQLQELDRQISDLRLDTET. Disordered regions lie at residues 288 to 312, 386 to 432, 564 to 615, and 627 to 655; these read SKPG…SSWH, QDAS…STTN, NSAS…KTKR, and ERHT…VLAK. The span at 388 to 400 shows a compositional bias: low complexity; the sequence is ASATSTEPSTASP. The span at 401-432 shows a compositional bias: polar residues; the sequence is QRQWSAESKGGTPQNGAYLSSSQPQNSYSTTN. Composition is skewed to basic residues over residues 584–593, 601–615, and 639–649; these read DKHRTGSRRT, HLHK…KTKR, and AQRHHGHHRHH. The short motif at 818-821 is the PDZ-binding element; sequence MTTV.

Belongs to the dapper family. In terms of assembly, interacts with dvl2.

It is found in the cytoplasm. Functionally, involved in regulation of intracellular signaling pathways during development. Specifically thought to play a role in canonical and/or non-canonical Wnt signaling pathways through interaction with DSH (Dishevelled) family proteins. Binds to dvl2 and may regulate the degradation of ctnnb1/beta-catenin, thereby modulating the transcriptional activation of target genes of the Wnt signaling pathway. Seems to activate the canonical Wnt signaling pathway. The protein is Dapper homolog 1 (dact1) of Danio rerio (Zebrafish).